Reading from the N-terminus, the 201-residue chain is Putative 3-methyladenine DNA glycosylase (201 aa).

It belongs to the DNA glycosylase MPG family.

The sequence is that of Putative 3-methyladenine DNA glycosylase from Nitrosococcus oceani (strain ATCC 19707 / BCRC 17464 / JCM 30415 / NCIMB 11848 / C-107).